The following is a 113-amino-acid chain: Hydrogenase maturation factor HypA (113 aa).

His-2 contacts Ni(2+). Cys-73, Cys-76, Cys-89, and Cys-92 together coordinate Zn(2+).

It belongs to the HypA/HybF family.

Involved in the maturation of [NiFe] hydrogenases. Required for nickel insertion into the metal center of the hydrogenase. The sequence is that of Hydrogenase maturation factor HypA from Actinobacillus succinogenes (strain ATCC 55618 / DSM 22257 / CCUG 43843 / 130Z).